Consider the following 342-residue polypeptide: S-adenosyl-L-methionine-dependent tRNA 4-demethylwyosine synthase (342 aa).

The [2Fe-2S] cluster site is built by cysteine 45, cysteine 58, and cysteine 71. One can recognise a Radical SAM core domain in the interval 64–312 (YGIHSHRCLQ…VKHLPGYHIE (249 aa)). Cysteine 81, cysteine 85, and cysteine 88 together coordinate [4Fe-4S] cluster.

The protein belongs to the TYW1 family. As to quaternary structure, monomer. [2Fe-2S] cluster is required as a cofactor. [4Fe-4S] cluster serves as cofactor.

The protein localises to the cytoplasm. The enzyme catalyses N(1)-methylguanosine(37) in tRNA(Phe) + pyruvate + S-adenosyl-L-methionine = 4-demethylwyosine(37) in tRNA(Phe) + 5'-deoxyadenosine + L-methionine + CO2 + H2O. Its function is as follows. Component of the wyosine derivatives biosynthesis pathway that catalyzes the condensation of N-methylguanine with 2 carbon atoms from pyruvate to form the tricyclic 4-demethylwyosine (imG-14) on guanosine-37 of tRNA(Phe). The polypeptide is S-adenosyl-L-methionine-dependent tRNA 4-demethylwyosine synthase (Pyrococcus horikoshii (strain ATCC 700860 / DSM 12428 / JCM 9974 / NBRC 100139 / OT-3)).